The following is a 295-amino-acid chain: uncharacterized protein (295 aa).

2 disordered regions span residues 33-52 and 180-295; these read VDAP…DSHS and LSKA…AELK. Residue Ser-50 is modified to Phosphoserine. 2 stretches are compositionally biased toward polar residues: residues 205–217 and 241–251; these read QKNS…SKLI and TSRASVLSQSP. Positions 267–276 are enriched in acidic residues; it reads EASEGPEDTP. Low complexity predominate over residues 277–289; sequence ESSQSPEESVSAS.

This is an uncharacterized protein from Homo sapiens (Human).